The chain runs to 344 residues: MGIESSCDETGVGIVRWHPDGTCELLADEVASSVDQHARFGGVVPEIASRAHLEAIVPAMRRALSAAGIAKPDALAVTIGPGLAGALLVGVAAAKAYAAAWDVPFYALNHLGGHVAVDTLEHGPMPPCVALLVSGGHTHLLHVTDLAAPIVELGSTVDDAAGEAFDKVARLLGLGFPGGPALDAAARDGDPHAIAFPRGMTGPRDPRYDFSFSGLKTAVARHVEAAQRAGVAIADLPIPDIAASFQEAVADVLTMKAVRAAQDMGVDTLVLGGGATANSRIRSLAEERCAAAGLTLRVPKPRLCTDNGVMIAALGAHVIAGGARPSPLTVASDPGLPVSVSQIA.

Histidine 110 and histidine 114 together coordinate Fe cation. Residues 132–136 (LVSGG), aspartate 166, glycine 179, aspartate 183, and asparagine 278 each bind substrate. Aspartate 306 contacts Fe cation.

The protein belongs to the KAE1 / TsaD family. Fe(2+) is required as a cofactor.

It localises to the cytoplasm. The catalysed reaction is L-threonylcarbamoyladenylate + adenosine(37) in tRNA = N(6)-L-threonylcarbamoyladenosine(37) in tRNA + AMP + H(+). Its function is as follows. Required for the formation of a threonylcarbamoyl group on adenosine at position 37 (t(6)A37) in tRNAs that read codons beginning with adenine. Is involved in the transfer of the threonylcarbamoyl moiety of threonylcarbamoyl-AMP (TC-AMP) to the N6 group of A37, together with TsaE and TsaB. TsaD likely plays a direct catalytic role in this reaction. The protein is tRNA N6-adenosine threonylcarbamoyltransferase of Nocardia farcinica (strain IFM 10152).